The following is a 727-amino-acid chain: Pre-B-cell leukemia transcription factor-interacting protein 1 (727 aa).

Residues 1–10 (MASCPDSDNS) show a composition bias toward polar residues. A disordered region spans residues 1–135 (MASCPDSDNS…SPHRSLPSSP (135 aa)). The segment covering 39–53 (RAPQSPSRAAAEESA) has biased composition (low complexity). Ser-43 is modified (phosphoserine). Residues 61 to 70 (TVSQNESSKS) are compositionally biased toward polar residues. Residues Ser-130, Ser-134, Ser-147, Ser-148, and Ser-149 each carry the phosphoserine modification. Thr-153 bears the Phosphothreonine mark. Coiled coils occupy residues 269–353 (QNMA…QGAD) and 380–421 (SPGF…SLKE). Residues 488-506 (WKTEHWKHKKEASGREKSW) carry the Nuclear localization signal motif. Disordered regions lie at residues 491–568 (EHWK…AKDR) and 701–727 (KRSG…HRQG). Composition is skewed to basic and acidic residues over residues 498–544 (EASG…EPPR), 551–568 (PSGE…AKDR), and 716–727 (GPREEHSPHRQG). The short motif at 696-719 (DKALKKRSGKKDKHLQNRVVGPRE) is the Nuclear localization signal element.

Interacts with ESR1, PBX1, PBX2 and PBX3. Interacts with TEX11.

The protein localises to the cytoplasm. It is found in the cytoskeleton. The protein resides in the nucleus. Regulator of pre-B-cell leukemia transcription factors (BPXs) function. Inhibits the binding of PBX1-HOX complex to DNA and blocks the transcriptional activity of E2A-PBX1. Tethers estrogen receptor-alpha (ESR1) to microtubules and allows them to influence estrogen receptors-alpha signaling. This Bos taurus (Bovine) protein is Pre-B-cell leukemia transcription factor-interacting protein 1 (PBXIP1).